The following is a 64-amino-acid chain: UPF0434 protein Oant_3286 (64 aa).

This sequence belongs to the UPF0434 family.

The polypeptide is UPF0434 protein Oant_3286 (Brucella anthropi (strain ATCC 49188 / DSM 6882 / CCUG 24695 / JCM 21032 / LMG 3331 / NBRC 15819 / NCTC 12168 / Alc 37) (Ochrobactrum anthropi)).